A 320-amino-acid chain; its full sequence is Aspartate carbamoyltransferase catalytic subunit (320 aa).

Residues Arg68 and Thr69 each contribute to the carbamoyl phosphate site. Residue Lys96 participates in L-aspartate binding. Positions 118, 148, and 151 each coordinate carbamoyl phosphate. The L-aspartate site is built by Arg181 and Arg236. Carbamoyl phosphate contacts are provided by Gly277 and Pro278.

Belongs to the aspartate/ornithine carbamoyltransferase superfamily. ATCase family. As to quaternary structure, heterododecamer (2C3:3R2) of six catalytic PyrB chains organized as two trimers (C3), and six regulatory PyrI chains organized as three dimers (R2).

The catalysed reaction is carbamoyl phosphate + L-aspartate = N-carbamoyl-L-aspartate + phosphate + H(+). It participates in pyrimidine metabolism; UMP biosynthesis via de novo pathway; (S)-dihydroorotate from bicarbonate: step 2/3. Functionally, catalyzes the condensation of carbamoyl phosphate and aspartate to form carbamoyl aspartate and inorganic phosphate, the committed step in the de novo pyrimidine nucleotide biosynthesis pathway. The chain is Aspartate carbamoyltransferase catalytic subunit from Leptothrix cholodnii (strain ATCC 51168 / LMG 8142 / SP-6) (Leptothrix discophora (strain SP-6)).